The primary structure comprises 207 residues: 3-hexulose-6-phosphate synthase (207 aa).

This sequence belongs to the HPS/KGPDC family. HPS subfamily.

It catalyses the reaction D-ribulose 5-phosphate + formaldehyde = D-arabino-hex-3-ulose 6-phosphate. Its pathway is one-carbon metabolism; formaldehyde assimilation via RuMP pathway; D-fructose 6-phosphate from D-ribulose 5-phosphate and formaldehyde: step 1/2. In terms of biological role, catalyzes the condensation of ribulose 5-phosphate with formaldehyde to form 3-hexulose 6-phosphate. In Mycobacterium gastri, this protein is 3-hexulose-6-phosphate synthase (rmpA).